Consider the following 397-residue polypeptide: Chorismate synthase (397 aa).

NADP(+) contacts are provided by arginine 40 and arginine 46. Residues 129–131 (RSS), 257–258 (QA), glycine 302, 317–321 (KPISS), and arginine 343 each bind FMN.

The protein belongs to the chorismate synthase family. In terms of assembly, homotetramer. The cofactor is FMNH2.

The catalysed reaction is 5-O-(1-carboxyvinyl)-3-phosphoshikimate = chorismate + phosphate. It functions in the pathway metabolic intermediate biosynthesis; chorismate biosynthesis; chorismate from D-erythrose 4-phosphate and phosphoenolpyruvate: step 7/7. Its function is as follows. Catalyzes the anti-1,4-elimination of the C-3 phosphate and the C-6 proR hydrogen from 5-enolpyruvylshikimate-3-phosphate (EPSP) to yield chorismate, which is the branch point compound that serves as the starting substrate for the three terminal pathways of aromatic amino acid biosynthesis. This reaction introduces a second double bond into the aromatic ring system. The protein is Chorismate synthase of Chlorobium luteolum (strain DSM 273 / BCRC 81028 / 2530) (Pelodictyon luteolum).